Here is a 312-residue protein sequence, read N- to C-terminus: Protoheme IX farnesyltransferase (312 aa).

9 helical membrane-spanning segments follow: residues 31–51 (LLMK…GLFI), 58–78 (PLLS…AGAI), 107–127 (TALT…AICV), 130–150 (ISSI…TMWL), 157–177 (NIVI…SAVT), 184–204 (CLML…TLSL), 229–249 (YSIL…YFTD), 250–270 (IAGL…LCYA), and 286–306 (FKYS…EHCI).

It belongs to the UbiA prenyltransferase family. Protoheme IX farnesyltransferase subfamily.

It localises to the cell inner membrane. It carries out the reaction heme b + (2E,6E)-farnesyl diphosphate + H2O = Fe(II)-heme o + diphosphate. It participates in porphyrin-containing compound metabolism; heme O biosynthesis; heme O from protoheme: step 1/1. Its function is as follows. Converts heme B (protoheme IX) to heme O by substitution of the vinyl group on carbon 2 of heme B porphyrin ring with a hydroxyethyl farnesyl side group. In Orientia tsutsugamushi (strain Ikeda) (Rickettsia tsutsugamushi), this protein is Protoheme IX farnesyltransferase.